Here is a 246-residue protein sequence, read N- to C-terminus: Indole-3-glycerol phosphate synthase (246 aa).

Belongs to the TrpC family.

It carries out the reaction 1-(2-carboxyphenylamino)-1-deoxy-D-ribulose 5-phosphate + H(+) = (1S,2R)-1-C-(indol-3-yl)glycerol 3-phosphate + CO2 + H2O. The protein operates within amino-acid biosynthesis; L-tryptophan biosynthesis; L-tryptophan from chorismate: step 4/5. The sequence is that of Indole-3-glycerol phosphate synthase from Sulfurisphaera tokodaii (strain DSM 16993 / JCM 10545 / NBRC 100140 / 7) (Sulfolobus tokodaii).